The sequence spans 135 residues: FK506-binding protein 2 (135 aa).

A signal peptide spans 1-17 (MLLKSLFLLFLTAIAFA). Residues 40–127 (GDLISVHYEG…VFVAELVDIA (88 aa)) form the PPIase FKBP-type domain. Residues 132 to 135 (HDEL) carry the Prevents secretion from ER motif.

Belongs to the FKBP-type PPIase family. FKBP2 subfamily.

It localises to the endoplasmic reticulum. The enzyme catalyses [protein]-peptidylproline (omega=180) = [protein]-peptidylproline (omega=0). With respect to regulation, inhibited by both FK506 and rapamycin. PPIases accelerate the folding of proteins. It catalyzes the cis-trans isomerization of proline imidic peptide bonds in oligopeptides. This chain is FK506-binding protein 2 (FPR2), found in Debaryomyces hansenii (strain ATCC 36239 / CBS 767 / BCRC 21394 / JCM 1990 / NBRC 0083 / IGC 2968) (Yeast).